Here is a 299-residue protein sequence, read N- to C-terminus: MESSGSSKVRWGQNRRLNFIDVRLQYDGRINRSDLMQFFDISAPQASADLGLYQQLAGDNLVYDTRQRIYLATPEFKPITKRSEATRYLNELQRLARGIVEPDESFVGYQPSTGVVVSPSRAIEADEVATLLRAIRDRVALRVRYQSMDAPEPQEWVLSPHALGFDGLRWHARAWCHARQVFRDFAIGRLDVLEHVFSAKPVDPLLDEGWNNEVTVSLVPHPGLTPSQRRVVMRDYGMVDGHCELRCRKAMLFYTLRHLNLESLAISDVPAQQHVVVENAEEVKQWMREDRDGLQHLRR.

The tract at residues 1-84 (MESSGSSKVR…EFKPITKRSE (84 aa)) is winged HTH domain. Positions 85–196 (ATRYLNELQR…IGRLDVLEHV (112 aa)) are WYL domain. The 81-residue stretch at 120-200 (SRAIEADEVA…DVLEHVFSAK (81 aa)) folds into the WYL domain. The probable ligand-binding region stretch occupies residues 145 to 189 (YQSMDAPEPQEWVLSPHALGFDGLRWHARAWCHARQVFRDFAIGR). Residues 197–299 (FSAKPVDPLL…DRDGLQHLRR (103 aa)) form a WCX domain region.

In terms of assembly, homodimer.

Its function is as follows. Transcriptional regulator of a CBASS antivirus system. CBASS (cyclic oligonucleotide-based antiphage signaling system) provides immunity against bacteriophage. The CD-NTase protein synthesizes cyclic nucleotides in response to infection; these serve as specific second messenger signals. The signals activate a diverse range of effectors, leading to bacterial cell death and thus abortive phage infection. A type III CBASS system, part of a CapW-Cap6-Cap8-Cap7-CdnC-NucC locus. Binds specifically to palindromes that overlap the -10 site in the promoter of cap6, found beween found between the genes for divergently transcribed capW and cap6 (cognate DNA). Probably represses transcription bidirectionally from the promoter. Mutations that make it a constitutive repressor in E.coli do not change DNA-binding affinity. The sequence is that of DNA-binding transcriptional repressor CapW from Stenotrophomonas maltophilia (Pseudomonas maltophilia).